The chain runs to 329 residues: D-alanine--D-alanine ligase (329 aa).

The region spanning K120 to R326 is the ATP-grasp domain. A150–E205 contacts ATP. 3 residues coordinate Mg(2+): D280, E293, and N295.

This sequence belongs to the D-alanine--D-alanine ligase family. It depends on Mg(2+) as a cofactor. Requires Mn(2+) as cofactor.

The protein localises to the cytoplasm. It carries out the reaction 2 D-alanine + ATP = D-alanyl-D-alanine + ADP + phosphate + H(+). It participates in cell wall biogenesis; peptidoglycan biosynthesis. Cell wall formation. The protein is D-alanine--D-alanine ligase of Aeromonas salmonicida (strain A449).